A 198-amino-acid chain; its full sequence is Large ribosomal subunit protein bL21 (198 aa).

Belongs to the bacterial ribosomal protein bL21 family. In terms of assembly, part of the 50S ribosomal subunit. Contacts protein L20.

This protein binds to 23S rRNA in the presence of protein L20. This Ruegeria sp. (strain TM1040) (Silicibacter sp.) protein is Large ribosomal subunit protein bL21.